We begin with the raw amino-acid sequence, 632 residues long: 1-deoxy-D-xylulose-5-phosphate synthase (632 aa).

Thiamine diphosphate contacts are provided by residues His77 and 118–120; that span reads GHA. Asp149 contacts Mg(2+). Residues 150–151, Asn178, Phe287, and Glu372 contribute to the thiamine diphosphate site; that span reads GS. Asn178 is a Mg(2+) binding site.

This sequence belongs to the transketolase family. DXPS subfamily. As to quaternary structure, homodimer. The cofactor is Mg(2+). Thiamine diphosphate serves as cofactor.

The catalysed reaction is D-glyceraldehyde 3-phosphate + pyruvate + H(+) = 1-deoxy-D-xylulose 5-phosphate + CO2. Its pathway is metabolic intermediate biosynthesis; 1-deoxy-D-xylulose 5-phosphate biosynthesis; 1-deoxy-D-xylulose 5-phosphate from D-glyceraldehyde 3-phosphate and pyruvate: step 1/1. Its function is as follows. Catalyzes the acyloin condensation reaction between C atoms 2 and 3 of pyruvate and glyceraldehyde 3-phosphate to yield 1-deoxy-D-xylulose-5-phosphate (DXP). This chain is 1-deoxy-D-xylulose-5-phosphate synthase, found in Chlorobium luteolum (strain DSM 273 / BCRC 81028 / 2530) (Pelodictyon luteolum).